The following is a 708-amino-acid chain: Solute carrier family 15 member 1 (708 aa).

A helical membrane pass occupies residues 1–21; that stretch reads MGMSKSYGCFGYPLSIFFIVV. At 22 to 53 the chain is on the extracellular side; sequence NEFCERFSYYGMRALLILYFRRFIGWDDNLST. N-linked (GlcNAc...) asparagine glycosylation is present at N50. Residues 54–74 form a helical membrane-spanning segment; it reads AIYHTFVALCYLTPILGALIA. The Cytoplasmic segment spans residues 75-82; that stretch reads DSWLGKFK. A helical membrane pass occupies residues 83 to 103; that stretch reads TIVSLSIVYTIGQAVTAVSSI. Residues 104–118 lie on the Extracellular side of the membrane; that stretch reads NDLTDYNKDGTPDNL. N117 is a glycosylation site (N-linked (GlcNAc...) asparagine). Residues 119-139 traverse the membrane as a helical segment; sequence SVHVALSMIGLALIALGTGGI. The Cytoplasmic portion of the chain corresponds to 140–161; it reads KPCVSAFGGDQFEEGQEKQRNR. Residues 162–182 traverse the membrane as a helical segment; the sequence is FFSIFYLAINAGSLISTIVTP. Residues 183–198 lie on the Extracellular side of the membrane; it reads MLRVHECGIYSQKACY. A helical transmembrane segment spans residues 199–219; sequence PLAFGVPAALMAVSLIVFVIG. The Cytoplasmic segment spans residues 220–276; that stretch reads SGMYKKFQPQGNVMGKVVKCIGFALKNRFRHRSKQFPKREHWLDWAKEKYDERLISQ. A helical membrane pass occupies residues 277–297; the sequence is IKMVTKVMFLYIPLPMFWALF. Topologically, residues 298 to 327 are extracellular; it reads DQQGSRWTLQATAMSGKIGLLEVQPDQMQT. Residues 328–348 traverse the membrane as a helical segment; sequence VNAILIVVMVPIMDAVVYPLI. Residues 349–361 are Cytoplasmic-facing; that stretch reads AKCGFNFTSLKRM. The chain crosses the membrane as a helical span at residues 362 to 382; the sequence is TVGMFLASMAFVMAAIVQLEI. At 383–584 the chain is on the extracellular side; it reads DKTLPVFPKQ…ISPNTVNMAL (202 aa). Positions 383-585 are extracellular domain (ECD); sequence DKTLPVFPKQ…SPNTVNMALQ (203 aa). N-linked (GlcNAc...) asparagine glycans are attached at residues N408, N439, N495, N499, N509, N514, N527, and N539. A helical transmembrane segment spans residues 585 to 605; sequence QIPQYFLITCGEVVFSVTGLE. Residues 606 to 619 lie on the Cytoplasmic side of the membrane; that stretch reads FSYSQAPSNMKSVL. A helical membrane pass occupies residues 620 to 640; the sequence is QAGWLLTVAVGNIIVLIVAGA. Topologically, residues 641–645 are extracellular; sequence GQFSE. The chain crosses the membrane as a helical span at residues 646 to 666; sequence QWAEYILFAALLLVVCVIFAI. The Cytoplasmic segment spans residues 667 to 708; that stretch reads MARFYTYVNPAEIEAQFDDDEKKNLEKMNVYSTVTPVSQTQM.

The protein belongs to the major facilitator superfamily. Proton-dependent oligopeptide transporter (POT/PTR) (TC 2.A.17) family. Interacts (via extracellular domain region) with trypsin.

It is found in the apical cell membrane. It catalyses the reaction a dipeptide(out) + H(+)(out) = a dipeptide(in) + H(+)(in). The enzyme catalyses an L-amino acid tripeptide(out) + H(+)(out) = an L-amino acid tripeptide(in) + H(+)(in). The catalysed reaction is L-alanyl-L-lysine(out) + H(+)(out) = L-alanyl-L-lysine(in) + H(+)(in). It carries out the reaction L-alanyl-L-proline(out) + H(+)(out) = L-alanyl-L-proline(in) + H(+)(in). It catalyses the reaction L-alanyl-L-valine(out) + H(+)(out) = L-alanyl-L-valine(in) + H(+)(in). The enzyme catalyses carnosine(out) + H(+)(out) = carnosine(in) + H(+)(in). The catalysed reaction is glycyl-L-glutamine(out) + H(+)(out) = glycyl-L-glutamine(in) + H(+)(in). It carries out the reaction glycyl-L-leucine(out) + H(+)(out) = glycyl-L-leucine(in) + H(+)(in). It catalyses the reaction glycyl-L-proline(out) + H(+)(out) = glycyl-L-proline(in) + H(+)(in). The enzyme catalyses glycyl-sarcosine(out) + H(+)(out) = glycyl-sarcosine(in) + H(+)(in). The catalysed reaction is L-leucyl-L-leucine(out) + H(+)(out) = L-leucyl-L-leucine(in) + H(+)(in). It carries out the reaction L-leucyl-L-proline(out) + H(+)(out) = L-leucyl-L-proline(in) + H(+)(in). It catalyses the reaction L-phenylalanyl-L-leucine(out) + H(+)(out) = L-phenylalanyl-L-leucine(in) + H(+)(in). The enzyme catalyses L-phenylalanyl-L-phenylalanine(out) + H(+)(out) = L-phenylalanyl-L-phenylalanine(in) + H(+)(in). The catalysed reaction is L-lysyl-glycine(out) + H(+)(out) = L-lysyl-glycine(in) + H(+)(in). It carries out the reaction L-tyrosylglycine(out) + H(+)(out) = L-tyrosylglycine(in) + H(+)(in). It catalyses the reaction L-alanyl-L-aspartate(out) + 2 H(+)(out) = L-alanyl-L-aspartate(in) + 2 H(+)(in). The enzyme catalyses L-aspartyl-glycine(out) + 2 H(+)(out) = L-aspartyl-glycine(in) + 2 H(+)(in). The catalysed reaction is glycyl-L-aspartate(out) + 2 H(+)(out) = glycyl-L-aspartate(in) + 2 H(+)(in). It carries out the reaction glycyl-L-glutamate(out) + 2 H(+)(out) = glycyl-L-glutamate(in) + 2 H(+)(in). It catalyses the reaction L-alanyl-L-leucyl-L-alanine(out) + H(+)(out) = L-alanyl-L-leucyl-L-alanine(in) + H(+)(in). The enzyme catalyses L-alanyl-L-prolylglycine(out) + H(+)(out) = L-alanyl-L-prolylglycine(in) + H(+)(in). The catalysed reaction is glycylglycyl-L-isoleucine(out) + H(+)(out) = glycylglycyl-L-isoleucine(in) + H(+)(in). It carries out the reaction glycylglycyl-L-proline(out) + H(+)(out) = glycylglycyl-L-proline(in) + H(+)(in). It catalyses the reaction L-methionyl-L-phenylalanyl-L-methionine(out) + H(+)(out) = L-methionyl-L-phenylalanyl-L-methionine(in) + H(+)(in). The enzyme catalyses N-acetyl-D-muramoyl-L-alanyl-D-isoglutamine(out) + 2 H(+)(out) = N-acetyl-D-muramoyl-L-alanyl-D-isoglutamine(in) + 2 H(+)(in). The catalysed reaction is N(alpha)-formyl-L-methionyl-L-leucyl-L-phenylalanine(out) + 2 H(+)(out) = N(alpha)-formyl-L-methionyl-L-leucyl-L-phenylalanine(in) + 2 H(+)(in). Its function is as follows. Electrogenic proton-coupled amino-acid transporter that transports oligopeptides of 2 to 4 amino acids with a preference for dipeptides. Transports neutral and monovalently charged peptides with a proton to peptide stoichiometry of 1:1 or 2:1. Primarily responsible for the absorption of dietary di- and tripeptides from the small intestinal lumen. Mediates transepithelial transport of muramyl and N-formylated bacterial dipeptides contributing to recognition of pathogenic bacteria by the mucosal immune system. The chain is Solute carrier family 15 member 1 (SLC15A1) from Canis lupus familiaris (Dog).